The chain runs to 141 residues: Early nodulin-like protein 19 (141 aa).

The N-terminal stretch at Met-1–Ala-26 is a signal peptide. Residues Lys-27–Thr-127 enclose the Phytocyanin domain. Asn-42 and Asn-88 each carry an N-linked (GlcNAc...) asparagine glycan. Cysteines 80 and 115 form a disulfide.

The protein belongs to the early nodulin-like (ENODL) family.

Its function is as follows. May act as a carbohydrate transporter. The protein is Early nodulin-like protein 19 of Arabidopsis thaliana (Mouse-ear cress).